A 336-amino-acid chain; its full sequence is Major histocompatibility complex class I-related protein 1 (336 aa).

A signal peptide spans 1 to 18 (MMLLLPLIIVLMMKLSDA). Positions 19 to 105 (RTHSLRYFRL…KQLQHHYNHS (87 aa)) are alpha-1. An antigen-binding cleft region spans residues 19–197 (RTHSLRYFRL…EYGKDALQRT (179 aa)). Over 19–298 (RTHSLRYFRL…QESETILLVV (280 aa)) the chain is Extracellular. Y25 and R27 together coordinate 8-(9H-purin-6-yl)-2-oxa-8-azabicyclo[3.3.1]nona-3,6-diene-4,6-dicarbaldehyde. Residues R27, S42, and K61 each coordinate 5-(2-oxoethylideneamino)-6-(D-ribitylamino)uracil. Residues R27, S42, and K61 each contribute to the 5-(2-oxopropylideneamino)-6-(D-ribitylamino)uracil site. Residues R27, S42, and K61 each contribute to the 7-hydroxy-6-methyl-8-(1-D-ribityl)lumazine site. The 8-(9H-purin-6-yl)-2-oxa-8-azabicyclo[3.3.1]nona-3,6-diene-4,6-dicarbaldehyde site is built by K61 and H76. A 2-amino-4-oxopteridine-6-carbaldehyde-binding site is contributed by K61. K61 provides a ligand contact to pyridoxal. A glycan (N-linked (GlcNAc...) asparagine) is linked at N103. Residues 106–197 (GFHTYQRMIG…EYGKDALQRT (92 aa)) are alpha-2. Residue R112 participates in 8-(9H-purin-6-yl)-2-oxa-8-azabicyclo[3.3.1]nona-3,6-diene-4,6-dicarbaldehyde binding. Residues R112, Y170, and Q171 each coordinate 5-(2-oxoethylideneamino)-6-(D-ribitylamino)uracil. Residues R112, Y170, and Q171 each contribute to the 5-(2-oxopropylideneamino)-6-(D-ribitylamino)uracil site. R112, Y170, and Q171 together coordinate 7-hydroxy-6-methyl-8-(1-D-ribityl)lumazine. Intrachain disulfides connect C116–C179 and C218–C274. An alpha-3 region spans residues 198 to 289 (EPPKVRVNHK…GVHMVLQGFQ (92 aa)). One can recognise an Ig-like C1-type domain in the interval 200-295 (PKVRVNHKET…QGFQESETIL (96 aa)). Residues 290-298 (ESETILLVV) are connecting peptide. Residues 299-319 (KAVGFIVLAIALAGVGILAWR) form a helical membrane-spanning segment. Residues 320–336 (KRPRGKNKVICLSTPEH) are Cytoplasmic-facing.

This sequence belongs to the MHC class I family. As to quaternary structure, heterotrimer that consists of MR1, B2M and metabolite antigen. Major classes of metabolite ligands presented by MR1 include riboflavin-related antigens, pyrimidines and ribityl lumazines, nucleobase adducts and folate derivatives. Forms reversible covalent Schiff base complexes with microbial pyrimidine-based metabolite, which serves as a molecular switch triggering complete folding, stable association with B2M and translocation of the ternary complex from endoplasmic reticulum to the plasma membrane. Alternatively, forms non-Schiff base complexes with ribityl lumazines. On antigen-presenting cells, the ternary complex interacts with TCR on MR1-restricted T cells. Interacts with TAPBP and TAPBPL chaperones in the endoplasmic reticulum. TAPBP associated or not with MHC class I peptide loading complex binds ligand-free MR1 or MR1-B2M complex, providing for stable MR1 pools ready for metabolite antigen processing. TAPBPL interacts with MR1 in a ligand-independent way; this interaction may stabilize MR1 pool and facilitate ligand loading and dissociation. Structurally, MR1-B2M heterodimer adopts a topology similar to classical MHC class I molecules, with alpha-1 and alpha-2 domains of MR1 forming the antigen-binding cleft composed of two alpha-helices resting on a floor of 7-stranded anti-parallel beta-pleated sheet. MR1-B2M heterodimer (via alpha-helices) interacts with TCR (via CDR domains). N-glycosylated.

The protein resides in the cell membrane. It localises to the endoplasmic reticulum membrane. It is found in the golgi apparatus membrane. The protein localises to the early endosome membrane. Its subcellular location is the late endosome membrane. Functionally, antigen-presenting molecule specialized in displaying microbial pyrimidine-based metabolites to alpha-beta T cell receptors (TCR) on innate-type mucosal-associated invariant T (MAIT) cells. In complex with B2M preferentially presents riboflavin-derived metabolites to semi-invariant TCRs on MAIT cells, guiding immune surveillance of the microbial metabolome at mucosal epithelial barriers. Signature pyrimidine-based microbial antigens are generated via non-enzymatic condensation of metabolite intermediates of the riboflavin pathway with by-products arising from other metabolic pathways such as glycolysis. Typical potent antigenic metabolites are 5-(2-oxoethylideneamino)-6-D-ribitylaminouracil (5-OE-RU) and 5-(2-oxopropylideneamino)-6-D-ribitylaminouracil (5-OP-RU), products of condensation of 5-amino-6-D-ribityaminouracil (5-A-RU) with glyoxal or methylglyoxal by-products, respectively. May present microbial antigens to various MAIT cell subsets, providing for unique recognition of diverse microbes, including pathogens that do not synthesize riboflavin. Upon antigen recognition, elicits rapid innate-type MAIT cell activation to eliminate pathogenic microbes by directly killing infected cells. During T cell development, drives thymic selection and post-thymic terminal differentiation of MAIT cells in a process dependent on commensal microflora. Acts as an immune sensor of cancer cell metabolome. May present a tumor-specific or -associated metabolite essential for cancer cell survival to a pan-cancer TCR on a non-MAIT CD8-positive T cell clone, triggering T cell-mediated killing of a wide range of cancer cell types. May present tumor-enriched pyridoxal and pyridoxal 5'-phosphate antigens, enabling preferential recognition of cancer cells. Presents nucleobase carbonyl adducts generated during oxidative stress. Captures M3Ade, a nucleobase adduct composed of one adenine modified by a malondialdehyde trimer, for recognition by MR1-restricted T cell clones expressing a polyclonal TCR repertoire. The protein is Major histocompatibility complex class I-related protein 1 of Bos taurus (Bovine).